A 167-amino-acid polypeptide reads, in one-letter code: Gametocyte-specific factor 1 (167 aa).

A Phosphoserine modification is found at Ser-8. CHHC U11-48K-type zinc fingers lie at residues 14–41 (LLQC…RKNH) and 48–75 (LATC…DDRS). Zn(2+) contacts are provided by Cys-17, His-23, His-33, Cys-37, Cys-51, His-57, His-67, and Cys-71.

Belongs to the UPF0224 (FAM112) family.

It is found in the cytoplasm. Required for spermatogenesis and is involved in the suppression of retrotransposon transcription in male germ cells. This is Gametocyte-specific factor 1 (GTSF1) from Homo sapiens (Human).